We begin with the raw amino-acid sequence, 457 residues long: Chromosomal replication initiator protein DnaA (457 aa).

The tract at residues M1 to A90 is domain I, interacts with DnaA modulators. The segment at G79–S120 is disordered. Positions A84–P99 are enriched in low complexity. Positions P91–S120 are domain II. Residues N121–A337 form a domain III, AAA+ region region. ATP-binding residues include G165, G167, K168, and T169. The interval N338–S457 is domain IV, binds dsDNA.

Belongs to the DnaA family. As to quaternary structure, oligomerizes as a right-handed, spiral filament on DNA at oriC.

Its subcellular location is the cytoplasm. Plays an essential role in the initiation and regulation of chromosomal replication. ATP-DnaA binds to the origin of replication (oriC) to initiate formation of the DNA replication initiation complex once per cell cycle. Binds the DnaA box (a 9 base pair repeat at the origin) and separates the double-stranded (ds)DNA. Forms a right-handed helical filament on oriC DNA; dsDNA binds to the exterior of the filament while single-stranded (ss)DNA is stabiized in the filament's interior. The ATP-DnaA-oriC complex binds and stabilizes one strand of the AT-rich DNA unwinding element (DUE), permitting loading of DNA polymerase. After initiation quickly degrades to an ADP-DnaA complex that is not apt for DNA replication. Binds acidic phospholipids. The protein is Chromosomal replication initiator protein DnaA of Shewanella amazonensis (strain ATCC BAA-1098 / SB2B).